A 327-amino-acid polypeptide reads, in one-letter code: Zinc transport protein ZntB (327 aa).

Residues 1 to 273 (MEAIKGSDVN…ARRTYTMSLM (273 aa)) are Cytoplasmic-facing. Residues 274–294 (AMVFLPSTFLTGLFGVNLGGI) form a helical membrane-spanning segment. Residues 295 to 300 (PGGGWQ) are Periplasmic-facing. Residues 301–321 (FGFSIFCILLVVLIGGVALWL) traverse the membrane as a helical segment. Residues 322 to 327 (HRSKWL) lie on the Cytoplasmic side of the membrane.

The protein belongs to the CorA metal ion transporter (MIT) (TC 1.A.35) family.

The protein resides in the cell inner membrane. It carries out the reaction Zn(2+)(out) + H(+)(out) = Zn(2+)(in) + H(+)(in). Zinc transporter. Acts as a Zn(2+):proton symporter, which likely mediates zinc ion uptake. In Escherichia coli O139:H28 (strain E24377A / ETEC), this protein is Zinc transport protein ZntB.